The sequence spans 807 residues: DNA gyrase subunit B (807 aa).

The Toprim domain maps to Ser429–Pro543. Glu435, Asp508, and Asp510 together coordinate Mg(2+).

It belongs to the type II topoisomerase GyrB family. In terms of assembly, heterotetramer, composed of two GyrA and two GyrB chains. In the heterotetramer, GyrA contains the active site tyrosine that forms a transient covalent intermediate with DNA, while GyrB binds cofactors and catalyzes ATP hydrolysis. The cofactor is Mg(2+). It depends on Mn(2+) as a cofactor. Ca(2+) is required as a cofactor.

Its subcellular location is the cytoplasm. The enzyme catalyses ATP-dependent breakage, passage and rejoining of double-stranded DNA.. Functionally, a type II topoisomerase that negatively supercoils closed circular double-stranded (ds) DNA in an ATP-dependent manner to modulate DNA topology and maintain chromosomes in an underwound state. Negative supercoiling favors strand separation, and DNA replication, transcription, recombination and repair, all of which involve strand separation. Also able to catalyze the interconversion of other topological isomers of dsDNA rings, including catenanes and knotted rings. Type II topoisomerases break and join 2 DNA strands simultaneously in an ATP-dependent manner. The protein is DNA gyrase subunit B of Rickettsia conorii (strain ATCC VR-613 / Malish 7).